The chain runs to 338 residues: 1-aminocyclopropane-1-carboxylate deaminase (338 aa).

N6-(pyridoxal phosphate)lysine is present on K51. The Nucleophile role is filled by S78.

This sequence belongs to the ACC deaminase/D-cysteine desulfhydrase family. In terms of assembly, homotrimer. The cofactor is pyridoxal 5'-phosphate.

The enzyme catalyses 1-aminocyclopropane-1-carboxylate + H2O = 2-oxobutanoate + NH4(+). In terms of biological role, catalyzes a cyclopropane ring-opening reaction, the irreversible conversion of 1-aminocyclopropane-1-carboxylate (ACC) to ammonia and alpha-ketobutyrate. Allows growth on ACC as a nitrogen source. This Pseudomonas syringae pv. tomato (strain ATCC BAA-871 / DC3000) protein is 1-aminocyclopropane-1-carboxylate deaminase.